A 602-amino-acid chain; its full sequence is Type 2 DNA topoisomerase 6 subunit B (602 aa).

ATP-binding positions include asparagine 40, aspartate 71, 92–93, 102–109, and lysine 425; these read SR and GQQGIGIS.

It belongs to the TOP6B family. Homodimer. Heterotetramer of two Top6A and two Top6B chains.

It carries out the reaction ATP-dependent breakage, passage and rejoining of double-stranded DNA.. Its function is as follows. Relaxes both positive and negative superturns and exhibits a strong decatenase activity. In Archaeoglobus fulgidus (strain ATCC 49558 / DSM 4304 / JCM 9628 / NBRC 100126 / VC-16), this protein is Type 2 DNA topoisomerase 6 subunit B.